A 310-amino-acid chain; its full sequence is D-alanyl-D-alanine endopeptidase (310 aa).

The N-terminal stretch at 1–23 (MRNRLLSLVTLFLSLSVATAVSA) is a signal peptide. The Acyl-ester intermediate role is filled by S66. Catalysis depends on K69, which acts as the Proton acceptor. S123 is an active-site residue. K230 is a binding site for substrate.

It belongs to the peptidase S11 family.

Its subcellular location is the periplasm. Functionally, cell wall formation. The protein is D-alanyl-D-alanine endopeptidase (pbpG) of Pseudomonas aeruginosa (strain ATCC 15692 / DSM 22644 / CIP 104116 / JCM 14847 / LMG 12228 / 1C / PRS 101 / PAO1).